An 860-amino-acid polypeptide reads, in one-letter code: Ras GTPase-activating-like protein gapA (860 aa).

Positions 1–20 (MEGLEIEDEDVILLDEDDDS) are enriched in acidic residues. Residues 1 to 48 (MEGLEIEDEDVILLDEDDDSSSSSTVNNSSSNIKNNGNTNNNIGNDDS) are disordered. The span at 21–46 (SSSSTVNNSSSNIKNNGNTNNNIGND) shows a compositional bias: low complexity. Residues 146–185 (AEIQELKRNMVAEIRRNHLLERDVNKLDKRIALLIKHRSN) adopt a coiled-coil conformation. The Ras-GAP domain occupies 269-515 (FLILSLFRLA…SIVRQYLEDL (247 aa)). Residues 663 to 732 (NNPQLSSNAE…TIALRDLRKH (70 aa)) are a coiled coil.

In terms of assembly, heterotetramer. Quaternary complex with activated rac1A, ctxA and ctxB in the absence of rgaA.

Functionally, part of signaling pathway that is required for completion of cytokinesis. gapA and rgaA control cortexillin localization to the cleavage furrow and hence may be involved in cleavage of the midbody in the final stage of cytokinesis by regulating the actin cytoskeleton. Forms a complex by linking activated rac1A to ctxA in the absence of rgaA. Assembly of this complex is necessary for the recruitment of cortexillin to the midzone of the dividing cell. The polypeptide is Ras GTPase-activating-like protein gapA (gapA) (Dictyostelium discoideum (Social amoeba)).